Consider the following 280-residue polypeptide: 4-diphosphocytidyl-2-C-methyl-D-erythritol kinase (280 aa).

Residue lysine 8 is part of the active site. 91-101 (PVSAGLAGGST) lines the ATP pocket. Residue aspartate 133 is part of the active site.

The protein belongs to the GHMP kinase family. IspE subfamily.

It carries out the reaction 4-CDP-2-C-methyl-D-erythritol + ATP = 4-CDP-2-C-methyl-D-erythritol 2-phosphate + ADP + H(+). The protein operates within isoprenoid biosynthesis; isopentenyl diphosphate biosynthesis via DXP pathway; isopentenyl diphosphate from 1-deoxy-D-xylulose 5-phosphate: step 3/6. Catalyzes the phosphorylation of the position 2 hydroxy group of 4-diphosphocytidyl-2C-methyl-D-erythritol. In Clostridium botulinum (strain Alaska E43 / Type E3), this protein is 4-diphosphocytidyl-2-C-methyl-D-erythritol kinase.